We begin with the raw amino-acid sequence, 381 residues long: Stearoyl-[acyl-carrier-protein] 9-desaturase 1, chloroplastic (381 aa).

Residues 1 to 26 constitute a chloroplast transit peptide; that stretch reads MQVVGTVRVSGCGAVVAPSRRQCRVS. Fe cation is bound by residues E120, E158, H161, E211, E244, and H247.

This sequence belongs to the fatty acid desaturase type 2 family. Homodimer. It depends on Fe(2+) as a cofactor.

The protein resides in the plastid. It is found in the chloroplast. It carries out the reaction octadecanoyl-[ACP] + 2 reduced [2Fe-2S]-[ferredoxin] + O2 + 2 H(+) = (9Z)-octadecenoyl-[ACP] + 2 oxidized [2Fe-2S]-[ferredoxin] + 2 H2O. Its pathway is lipid metabolism; fatty acid metabolism. Its function is as follows. Converts stearoyl-ACP to oleoyl-ACP by introduction of a cis double bond between carbons 9 and 10 of the acyl chain. The protein is Stearoyl-[acyl-carrier-protein] 9-desaturase 1, chloroplastic of Oryza sativa subsp. indica (Rice).